A 396-amino-acid chain; its full sequence is Lipid-A-disaccharide synthase (396 aa).

Belongs to the LpxB family.

It catalyses the reaction a lipid X + a UDP-2-N,3-O-bis[(3R)-3-hydroxyacyl]-alpha-D-glucosamine = a lipid A disaccharide + UDP + H(+). It functions in the pathway bacterial outer membrane biogenesis; LPS lipid A biosynthesis. In terms of biological role, condensation of UDP-2,3-diacylglucosamine and 2,3-diacylglucosamine-1-phosphate to form lipid A disaccharide, a precursor of lipid A, a phosphorylated glycolipid that anchors the lipopolysaccharide to the outer membrane of the cell. The polypeptide is Lipid-A-disaccharide synthase (Hahella chejuensis (strain KCTC 2396)).